We begin with the raw amino-acid sequence, 375 residues long: Serpin B5 (375 aa).

Asn-133, Asn-298, and Asn-361 each carry an N-linked (GlcNAc...) asparagine glycan.

The protein belongs to the serpin family. Ov-serpin subfamily. In terms of assembly, interacts with IRF6.

The protein localises to the secreted. It localises to the extracellular space. Tumor suppressor. It blocks the growth, invasion, and metastatic properties of mammary tumors. As it does not undergo the S (stressed) to R (relaxed) conformational transition characteristic of active serpins, it exhibits no serine protease inhibitory activity. In Mus musculus (Mouse), this protein is Serpin B5 (Serpinb5).